Here is a 149-residue protein sequence, read N- to C-terminus: Nucleoside diphosphate kinase (149 aa).

ATP-binding residues include lysine 9, phenylalanine 57, arginine 85, threonine 91, arginine 102, and asparagine 112. The Pros-phosphohistidine intermediate role is filled by histidine 115.

Belongs to the NDK family. In terms of assembly, homotetramer. Requires Mg(2+) as cofactor.

It is found in the cytoplasm. The enzyme catalyses a 2'-deoxyribonucleoside 5'-diphosphate + ATP = a 2'-deoxyribonucleoside 5'-triphosphate + ADP. The catalysed reaction is a ribonucleoside 5'-diphosphate + ATP = a ribonucleoside 5'-triphosphate + ADP. In terms of biological role, major role in the synthesis of nucleoside triphosphates other than ATP. The ATP gamma phosphate is transferred to the NDP beta phosphate via a ping-pong mechanism, using a phosphorylated active-site intermediate. The sequence is that of Nucleoside diphosphate kinase from Microcystis aeruginosa (strain NIES-843 / IAM M-2473).